The chain runs to 619 residues: Chaperone protein HscA homolog (619 aa).

Belongs to the heat shock protein 70 family.

Chaperone involved in the maturation of iron-sulfur cluster-containing proteins. Has a low intrinsic ATPase activity which is markedly stimulated by HscB. This Pseudomonas aeruginosa (strain UCBPP-PA14) protein is Chaperone protein HscA homolog.